The following is a 586-amino-acid chain: Mitochondrial tRNA methylthiotransferase CDK5RAP1 (586 aa).

Residues 1 to 30 constitute a mitochondrion transit peptide; that stretch reads MHPLQRVFRAQRLSAPLTSMCWVLLRTFRA. Positions 68-90 are disordered; the sequence is ASVPQEKPSSPEVEDPPPYLSGD. In terms of domain architecture, MTTase N-terminal spans 97–217; that stretch reads RKVYLETYGC…LPRLLAVVES (121 aa). The [4Fe-4S] cluster site is built by cysteine 106, cysteine 142, cysteine 180, cysteine 255, cysteine 259, and cysteine 262. Residues 241–495 form the Radical SAM core domain; that stretch reads SPSATSAFVS…ITVFREEASK (255 aa). One can recognise a TRAM domain in the interval 498-573; the sequence is ATSVGCTQLV…SQTLKGHILC (76 aa).

This sequence belongs to the methylthiotransferase family. MiaB subfamily. In terms of assembly, interacts with CDK5R1 (p35 form). CDK5RAP1, CDK5RAP2 and CDK5RAP3 show competitive binding to CDK5R1. Forms a complex with CDK5R1 and CDK5. The cofactor is [4Fe-4S] cluster. Expressed in brain.

It localises to the mitochondrion inner membrane. It catalyses the reaction N(6)-dimethylallyladenosine(37) in tRNA + (sulfur carrier)-SH + AH2 + 2 S-adenosyl-L-methionine = 2-methylsulfanyl-N(6)-dimethylallyladenosine(37) in tRNA + (sulfur carrier)-H + 5'-deoxyadenosine + L-methionine + A + S-adenosyl-L-homocysteine + 2 H(+). In terms of biological role, methylthiotransferase that catalyzes the conversion of N6-(dimethylallyl)adenosine (i(6)A) to 2-methylthio-N6-(dimethylallyl)adenosine (ms(2)i(6)A) at position 37 (adjacent to the 3'-end of the anticodon) of four mitochondrial DNA-encoded tRNAs (Ser(UCN), Phe, Tyr and Trp). Essential for efficient and highly accurate protein translation by the ribosome. Specifically inhibits CDK5 activation by CDK5R1. Essential for efficient mitochondrial protein synthesis and respiratory chain. This Rattus norvegicus (Rat) protein is Mitochondrial tRNA methylthiotransferase CDK5RAP1 (Cdk5rap1).